The following is a 58-amino-acid chain: uncharacterized protein (58 aa).

Disordered regions lie at residues 1–20 and 38–58; these read MKKN…MNKK and IIET…KKQQ.

This is an uncharacterized protein from Bacillus subtilis (strain 168).